A 133-amino-acid chain; its full sequence is ATP synthase epsilon chain, chloroplastic (133 aa).

This sequence belongs to the ATPase epsilon chain family. In terms of assembly, F-type ATPases have 2 components, CF(1) - the catalytic core - and CF(0) - the membrane proton channel. CF(1) has five subunits: alpha(3), beta(3), gamma(1), delta(1), epsilon(1). CF(0) has three main subunits: a, b and c.

It is found in the plastid. The protein localises to the chloroplast thylakoid membrane. Produces ATP from ADP in the presence of a proton gradient across the membrane. The chain is ATP synthase epsilon chain, chloroplastic from Nephroselmis olivacea (Green alga).